We begin with the raw amino-acid sequence, 153 residues long: MNKNFEEQEKKAKGGVRLAREEVFKLVFGVEATESASEELKQAFDIYLQNSEELIGTLNENQLEFLKSSIDGIAKNYDNIKDIIKKNTQNWAYERIGVVERALLIVATYEFIFKNAPIEVIANEIIELAKEYGNEKSYEFVNGILANIEKSKK.

This sequence belongs to the NusB family.

In terms of biological role, involved in transcription antitermination. Required for transcription of ribosomal RNA (rRNA) genes. Binds specifically to the boxA antiterminator sequence of the ribosomal RNA (rrn) operons. This is Transcription antitermination protein NusB from Fusobacterium nucleatum subsp. nucleatum (strain ATCC 25586 / DSM 15643 / BCRC 10681 / CIP 101130 / JCM 8532 / KCTC 2640 / LMG 13131 / VPI 4355).